Here is a 239-residue protein sequence, read N- to C-terminus: Dihydromethanopterin reductase (acceptor) (239 aa).

4Fe-4S ferredoxin-type domains lie at 144–175 (MPYNIDRKQCKHCETCPPRENCPHEAISEKNG) and 176–205 (VTDQIDLLKCKGCGICKELCPYNAIKGGPV). 8 residues coordinate [4Fe-4S] cluster: C153, C156, C159, C165, C185, C188, C191, and C195.

Homodimer. The cofactor is [4Fe-4S] cluster.

The enzyme catalyses 5,6,7,8-tetrahydromethanopterin + A = 7,8-dihydromethanopterin + AH2. The protein operates within cofactor biosynthesis; 5,6,7,8-tetrahydromethanopterin biosynthesis. Its function is as follows. Involved in the biosynthesis of tetrahydromethanopterin, a coenzyme used in methanogenesis. Catalyzes the reduction of dihydromethanopterin (H(2)MPT) to tetrahydromethanopterin (H(4)MPT). Ferredoxin may serve as an electron donor. This Methanosarcina mazei (strain ATCC BAA-159 / DSM 3647 / Goe1 / Go1 / JCM 11833 / OCM 88) (Methanosarcina frisia) protein is Dihydromethanopterin reductase (acceptor).